Here is a 991-residue protein sequence, read N- to C-terminus: Toll-like receptor 13 (991 aa).

The N-terminal stretch at 1-68 (MSGLYRILVQ…GFSLPPVAET (68 aa)) is a signal peptide. The Extracellular portion of the chain corresponds to 69 to 783 (YGFNKCTQYE…DAMCNFDLGK (715 aa)). Residues asparagine 93, asparagine 109, and asparagine 125 are each glycosylated (N-linked (GlcNAc...) asparagine). LRR repeat units follow at residues 104–125 (YTTH…SFTN), 128–149 (ALVD…AFRG), 152–174 (NLTL…EGLS), 175–196 (SLKT…AFTP), 199–220 (KLKY…LEAV), 225–246 (CLER…PRSL), 248–268 (SLTH…SALS), 271–292 (NLTN…YLKT), 295–315 (QLKS…SAKH), 318–338 (NLRA…DMKT), 348–368 (KLET…KQLA), 372–394 (RLLF…EFNA), 397–418 (SLQK…TWSS), 421–442 (NLTS…AFSP), 445–466 (HLEF…AFSG), 469–490 (ALKE…SFTQ), 493–514 (NLEV…TFRP), 517–538 (KLQS…SFSG), 541–562 (NLRS…LFSG), 565–585 (KLLI…RTLQ), 594–617 (SLKQ…FFQG), 620–641 (SLQE…QFDP), 644–665 (NLTK…LNAS), 672–693 (RLKI…MFSS), and 696–716 (SLQV…SHLK). N-linked (GlcNAc...) asparagine glycosylation is found at asparagine 152 and asparagine 167. N-linked (GlcNAc...) asparagine glycosylation is found at asparagine 209, asparagine 233, asparagine 263, asparagine 271, asparagine 274, asparagine 300, and asparagine 310. N-linked (GlcNAc...) asparagine glycosylation is found at asparagine 357, asparagine 388, asparagine 413, and asparagine 421. Residues asparagine 644 and asparagine 663 are each glycosylated (N-linked (GlcNAc...) asparagine). Residues asparagine 711 and asparagine 742 are each glycosylated (N-linked (GlcNAc...) asparagine). Residues 729-779 (NKLQCTCDNLWFKNWSMNTEEVHIPFLRSYPCQQPGSQSLLIDFDDAMCNF) enclose the LRRCT domain. A helical transmembrane segment spans residues 784-804 (VYFLCSFSMVLSTMVFSWFST). Over 805–991 (KMIASLWYGL…KENTHLIVVE (187 aa)) the chain is Cytoplasmic. Residues 832–975 (FLYDAFVSFS…LFWARIRNAL (144 aa)) enclose the TIR domain.

This sequence belongs to the Toll-like receptor family. In terms of assembly, binds MYD88 via their respective TIR domains. Interacts with UNC93B1.

It is found in the endosome membrane. Functionally, component of innate and adaptive immunity that recognizes and binds 23S rRNA from bacteria. TLRs (Toll-like receptors) control host immune response against pathogens through recognition of molecular patterns specific to microorganisms. Acts via MYD88 and TRAF6, leading to NF-kappa-B activation, cytokine secretion and the inflammatory response. Specifically binds the 5'-CGGAAAGACC-3' sequence on bacterial 23S rRNA, a sequence also bound by MLS group antibiotics (including erythromycin). May also recognize vesicular stomatitis virus; however, these data require additional evidences. The chain is Toll-like receptor 13 (Tlr13) from Mus musculus (Mouse).